The sequence spans 108 residues: Phosphoribosyl-ATP pyrophosphatase (108 aa).

The protein belongs to the PRA-PH family.

It localises to the cytoplasm. The catalysed reaction is 1-(5-phospho-beta-D-ribosyl)-ATP + H2O = 1-(5-phospho-beta-D-ribosyl)-5'-AMP + diphosphate + H(+). It functions in the pathway amino-acid biosynthesis; L-histidine biosynthesis; L-histidine from 5-phospho-alpha-D-ribose 1-diphosphate: step 2/9. In Trichlorobacter lovleyi (strain ATCC BAA-1151 / DSM 17278 / SZ) (Geobacter lovleyi), this protein is Phosphoribosyl-ATP pyrophosphatase.